The following is a 287-amino-acid chain: tRNA-cytidine(32) 2-sulfurtransferase (287 aa).

The short motif at 39-44 is the PP-loop motif element; the sequence is SGGKDS. [4Fe-4S] cluster is bound by residues Cys-114, Cys-117, and Cys-205.

This sequence belongs to the TtcA family. As to quaternary structure, homodimer. Mg(2+) serves as cofactor. Requires [4Fe-4S] cluster as cofactor.

The protein resides in the cytoplasm. It catalyses the reaction cytidine(32) in tRNA + S-sulfanyl-L-cysteinyl-[cysteine desulfurase] + AH2 + ATP = 2-thiocytidine(32) in tRNA + L-cysteinyl-[cysteine desulfurase] + A + AMP + diphosphate + H(+). Its pathway is tRNA modification. Its function is as follows. Catalyzes the ATP-dependent 2-thiolation of cytidine in position 32 of tRNA, to form 2-thiocytidine (s(2)C32). The sulfur atoms are provided by the cysteine/cysteine desulfurase (IscS) system. The polypeptide is tRNA-cytidine(32) 2-sulfurtransferase (Dechloromonas aromatica (strain RCB)).